A 470-amino-acid polypeptide reads, in one-letter code: Coproporphyrinogen III oxidase (470 aa).

Residues 12–17 (GGGITG), 41–42 (EA), Lys49, 63–66 (GPDS), Val256, Trp409, and 448–450 (VGI) each bind FAD.

It belongs to the protoporphyrinogen/coproporphyrinogen oxidase family. Coproporphyrinogen III oxidase subfamily. As to quaternary structure, monomer. FAD serves as cofactor.

The protein resides in the cytoplasm. Its subcellular location is the cell membrane. It carries out the reaction coproporphyrinogen III + 3 O2 = coproporphyrin III + 3 H2O2. It functions in the pathway porphyrin-containing compound metabolism; protoheme biosynthesis. With respect to regulation, only weakly inhibited by acifluorfen, in contrast to eukaryotic family members. Weakly inhibited by methylacifluorfen. Bilirubin, biliverdin and hemin are all competitive inhibitors. Its function is as follows. Involved in coproporphyrin-dependent heme b biosynthesis. Catalyzes the oxidation of coproporphyrinogen III to coproporphyrin III. Can also oxidize protoporphyrinogen IX to protoporphyrin-IX. The specific activity for the oxidation of coproporphyrinogen III is much higher than that for the oxidation of protoporphyrinogen IX. Can also oxidize mesoporphyrinogen IX, but not uroporphyrinogen III. In Bacillus subtilis (strain 168), this protein is Coproporphyrinogen III oxidase.